A 370-amino-acid polypeptide reads, in one-letter code: UDP-N-acetylglucosamine--N-acetylmuramyl-(pentapeptide) pyrophosphoryl-undecaprenol N-acetylglucosamine transferase (370 aa).

UDP-N-acetyl-alpha-D-glucosamine is bound by residues 10-12 (TGG), N126, S200, I255, and Q300.

It belongs to the glycosyltransferase 28 family. MurG subfamily.

It localises to the cell membrane. The catalysed reaction is Mur2Ac(oyl-L-Ala-gamma-D-Glu-L-Lys-D-Ala-D-Ala)-di-trans,octa-cis-undecaprenyl diphosphate + UDP-N-acetyl-alpha-D-glucosamine = beta-D-GlcNAc-(1-&gt;4)-Mur2Ac(oyl-L-Ala-gamma-D-Glu-L-Lys-D-Ala-D-Ala)-di-trans,octa-cis-undecaprenyl diphosphate + UDP + H(+). The protein operates within cell wall biogenesis; peptidoglycan biosynthesis. Its function is as follows. Cell wall formation. Catalyzes the transfer of a GlcNAc subunit on undecaprenyl-pyrophosphoryl-MurNAc-pentapeptide (lipid intermediate I) to form undecaprenyl-pyrophosphoryl-MurNAc-(pentapeptide)GlcNAc (lipid intermediate II). The chain is UDP-N-acetylglucosamine--N-acetylmuramyl-(pentapeptide) pyrophosphoryl-undecaprenol N-acetylglucosamine transferase from Lactobacillus johnsonii (strain CNCM I-12250 / La1 / NCC 533).